A 407-amino-acid chain; its full sequence is S-adenosylmethionine synthase (407 aa).

His-15 is an ATP binding site. Asp-17 serves as a coordination point for Mg(2+). Glu-43 is a binding site for K(+). Positions 56 and 100 each coordinate L-methionine. Residues Gln-100–Glu-110 are flexible loop. ATP is bound by residues Asp-171–Lys-173, Lys-248–Phe-249, Asp-257, Arg-263–Lys-264, Ala-280, and Lys-284. An L-methionine-binding site is contributed by Asp-257. Lys-288 serves as a coordination point for L-methionine.

Belongs to the AdoMet synthase family. Homotetramer; dimer of dimers. Requires Mg(2+) as cofactor. It depends on K(+) as a cofactor.

Its subcellular location is the cytoplasm. It catalyses the reaction L-methionine + ATP + H2O = S-adenosyl-L-methionine + phosphate + diphosphate. It functions in the pathway amino-acid biosynthesis; S-adenosyl-L-methionine biosynthesis; S-adenosyl-L-methionine from L-methionine: step 1/1. Functionally, catalyzes the formation of S-adenosylmethionine (AdoMet) from methionine and ATP. The overall synthetic reaction is composed of two sequential steps, AdoMet formation and the subsequent tripolyphosphate hydrolysis which occurs prior to release of AdoMet from the enzyme. The polypeptide is S-adenosylmethionine synthase (Synechococcus sp. (strain RCC307)).